Consider the following 142-residue polypeptide: Transcriptional regulator MraZ (142 aa).

SpoVT-AbrB domains follow at residues 5 to 47 (THTP…PTPE) and 76 to 119 (AHDE…DRVA).

The protein belongs to the MraZ family. As to quaternary structure, forms oligomers.

The protein localises to the cytoplasm. It localises to the nucleoid. This is Transcriptional regulator MraZ from Salinispora tropica (strain ATCC BAA-916 / DSM 44818 / JCM 13857 / NBRC 105044 / CNB-440).